The sequence spans 464 residues: Glutamate--tRNA ligase (464 aa).

The 'HIGH' region signature appears at Pro-10 to Gly-20. Residues Gln-113–Ala-130 are compositionally biased toward basic and acidic residues. Positions Gln-113–Pro-142 are disordered. The short motif at Lys-242–Arg-246 is the 'KMSKS' region element. ATP is bound at residue Lys-245.

The protein belongs to the class-I aminoacyl-tRNA synthetase family. Glutamate--tRNA ligase type 1 subfamily. Monomer.

The protein resides in the cytoplasm. The catalysed reaction is tRNA(Glu) + L-glutamate + ATP = L-glutamyl-tRNA(Glu) + AMP + diphosphate. Functionally, catalyzes the attachment of glutamate to tRNA(Glu) in a two-step reaction: glutamate is first activated by ATP to form Glu-AMP and then transferred to the acceptor end of tRNA(Glu). This is Glutamate--tRNA ligase from Dechloromonas aromatica (strain RCB).